Consider the following 339-residue polypeptide: FR-33289 synthase (339 aa).

Residues His150, Asp152, and His288 each coordinate Fe(2+).

It belongs to the TfdA dioxygenase family. As to quaternary structure, homodimer. Fe(2+) serves as cofactor.

It carries out the reaction 3-(N-acetyl-N-hydroxy)aminopropylphosphonate + 2-oxoglutarate + O2 = (R)-(3-(acetylhydroxyamino)-2-hydroxypropyl)phosphonate + succinate + CO2. The protein operates within antibiotic biosynthesis. Its function is as follows. Monooxygenase involved in the biosynthesis of the phosphonate antibiotic FR-33289, an antimalarial agent. Catalyzes the oxidative decarboxylation of the antibiotic FR-900098 (3-(N-acetyl-N-hydroxy)aminopropylphosphonate) to form FR-33289 ((R)-(3-(acetylhydroxyamino)-2-hydroxypropyl)phosphonate). In Streptomyces rubellomurinus (strain ATCC 31215), this protein is FR-33289 synthase.